The sequence spans 173 residues: Large ribosomal subunit protein uL10 (173 aa).

Belongs to the universal ribosomal protein uL10 family. As to quaternary structure, part of the ribosomal stalk of the 50S ribosomal subunit. The N-terminus interacts with L11 and the large rRNA to form the base of the stalk. The C-terminus forms an elongated spine to which L12 dimers bind in a sequential fashion forming a multimeric L10(L12)X complex.

Functionally, forms part of the ribosomal stalk, playing a central role in the interaction of the ribosome with GTP-bound translation factors. The polypeptide is Large ribosomal subunit protein uL10 (Chlorobaculum parvum (strain DSM 263 / NCIMB 8327) (Chlorobium vibrioforme subsp. thiosulfatophilum)).